We begin with the raw amino-acid sequence, 141 residues long: MAKKVIAIIKIVLPAGKATPAPPVGPALGPYGVSSVNFCKEYNAKTADKGGLVIPAEITVYDDRSYSFVLKTPPASVLIAKAASVEKGSGEPNRKKVGSITKAQLEQIAKVKFPDLNTQNLEAASRIVEGTARNMGITITD.

The protein belongs to the universal ribosomal protein uL11 family. Part of the ribosomal stalk of the 50S ribosomal subunit. Interacts with L10 and the large rRNA to form the base of the stalk. L10 forms an elongated spine to which L12 dimers bind in a sequential fashion forming a multimeric L10(L12)X complex.

The protein resides in the plastid. It is found in the cyanelle. In terms of biological role, forms part of the ribosomal stalk which helps the ribosome interact with GTP-bound translation factors. In Cyanophora paradoxa, this protein is Large ribosomal subunit protein uL11c.